The following is a 288-amino-acid chain: Ribonuclease HIII (288 aa).

Residues 76–288 (YSAIGSDEVG…KNITKQFIKN (213 aa)) enclose the RNase H type-2 domain. 3 residues coordinate a divalent metal cation: Asp82, Glu83, and Asp185.

The protein belongs to the RNase HII family. RnhC subfamily. Mn(2+) is required as a cofactor. Requires Mg(2+) as cofactor.

It localises to the cytoplasm. The enzyme catalyses Endonucleolytic cleavage to 5'-phosphomonoester.. Functionally, endonuclease that specifically degrades the RNA of RNA-DNA hybrids. This Phytoplasma mali (strain AT) protein is Ribonuclease HIII.